We begin with the raw amino-acid sequence, 341 residues long: tRNA N6-adenosine threonylcarbamoyltransferase (341 aa).

Residues His-115 and His-119 each contribute to the Fe cation site. Substrate-binding positions include 137 to 141 (IVSGG), Asp-170, Gly-183, Asp-187, and Asn-276. Residue Asp-304 coordinates Fe cation.

It belongs to the KAE1 / TsaD family. Fe(2+) serves as cofactor.

It is found in the cytoplasm. The enzyme catalyses L-threonylcarbamoyladenylate + adenosine(37) in tRNA = N(6)-L-threonylcarbamoyladenosine(37) in tRNA + AMP + H(+). In terms of biological role, required for the formation of a threonylcarbamoyl group on adenosine at position 37 (t(6)A37) in tRNAs that read codons beginning with adenine. Is involved in the transfer of the threonylcarbamoyl moiety of threonylcarbamoyl-AMP (TC-AMP) to the N6 group of A37, together with TsaE and TsaB. TsaD likely plays a direct catalytic role in this reaction. The sequence is that of tRNA N6-adenosine threonylcarbamoyltransferase from Staphylococcus aureus (strain JH1).